Here is a 136-residue protein sequence, read N- to C-terminus: Putative pre-16S rRNA nuclease (136 aa).

The protein belongs to the YqgF nuclease family.

Its subcellular location is the cytoplasm. Could be a nuclease involved in processing of the 5'-end of pre-16S rRNA. In Francisella tularensis subsp. mediasiatica (strain FSC147), this protein is Putative pre-16S rRNA nuclease.